The chain runs to 52 residues: Conotoxin Cal6.3b (52 aa).

Positions 1–4 (KKKR) are excised as a propeptide. Intrachain disulfides connect Cys-12–Cys-23, Cys-15–Cys-27, and Cys-22–Cys-30. Position 50 is a glutamine amide (Gln-50).

Expressed by the venom duct.

It localises to the secreted. In terms of biological role, probable neurotoxin with unknown target. Possibly targets ion channels. This is Conotoxin Cal6.3b from Californiconus californicus (California cone).